A 1086-amino-acid polypeptide reads, in one-letter code: Endo-1,4-beta-xylanase C (1086 aa).

Positions 1–31 (MRGKWLRLCLAAVLIVSLLPGLGAGEWKASA) are cleaved as a signal peptide. CBM-cenC domains follow at residues 35-183 (GDIL…IRLV) and 197-359 (GQAL…ITAT). Residues 365–710 (EKNIPDLAKK…KPAYWALVDP (346 aa)) form the GH10 domain. Catalysis depends on E502, which acts as the Proton donor. The active site involves D556. Catalysis depends on E620, which acts as the Nucleophile.

The protein belongs to the glycosyl hydrolase 10 (cellulase F) family.

It catalyses the reaction Endohydrolysis of (1-&gt;4)-beta-D-xylosidic linkages in xylans.. The protein operates within glycan degradation; xylan degradation. Its function is as follows. Endoxylanase with high hydrolytic activity on birchwood and oat spelt xylan. Xylotetraose, xylotriose, xylobiose and xylose are the main products from birchwood xylan hydrolysis. Shows increasing activity on xylo-oligosaccharides of increasing length. Displays very low hydrolytic activity on Avicel, carboxymethylcellulose (CMC) and p-nitrophenyl-beta-xylopyranoside. Also shows transxylosidase activity, allowing the formation of xylo-oligosaccharides of higher degree of polymerization than the starting substrate. In Paenibacillus barcinonensis, this protein is Endo-1,4-beta-xylanase C (xynC).